Reading from the N-terminus, the 142-residue chain is Probable transport accessory protein MmpS5 (142 aa).

Residues 7–26 (RAWIPLLILVVVAIAGFTVQ) traverse the membrane as a helical segment.

This sequence belongs to the MmpS family.

Its subcellular location is the cell membrane. The sequence is that of Probable transport accessory protein MmpS5 (mmpS5) from Mycobacterium bovis (strain ATCC BAA-935 / AF2122/97).